A 470-amino-acid chain; its full sequence is Flavin-containing monooxygenase FMO GS-OX-like 6 (470 aa).

An FAD-binding site is contributed by 17–22 (GAGAAG). An NADP(+)-binding site is contributed by 214–219 (GYQSSG).

This sequence belongs to the FMO family. FAD is required as a cofactor.

Its function is as follows. Catalyzes the conversion of methylthioalkyl glucosinolates of any chain length into methylsulfinylalkyl glucosinolates. This is Flavin-containing monooxygenase FMO GS-OX-like 6 from Arabidopsis thaliana (Mouse-ear cress).